Reading from the N-terminus, the 443-residue chain is Enolase (443 aa).

Gln167 is a (2R)-2-phosphoglycerate binding site. Residue Glu209 is the Proton donor of the active site. Mg(2+) contacts are provided by Asp246, Glu291, and Asp318. Residues Lys343, Arg372, Ser373, and Lys394 each contribute to the (2R)-2-phosphoglycerate site. Lys343 acts as the Proton acceptor in catalysis.

It belongs to the enolase family. As to quaternary structure, component of the RNA degradosome, a multiprotein complex involved in RNA processing and mRNA degradation. It depends on Mg(2+) as a cofactor.

The protein resides in the cytoplasm. It localises to the secreted. It is found in the cell surface. It carries out the reaction (2R)-2-phosphoglycerate = phosphoenolpyruvate + H2O. The protein operates within carbohydrate degradation; glycolysis; pyruvate from D-glyceraldehyde 3-phosphate: step 4/5. Functionally, catalyzes the reversible conversion of 2-phosphoglycerate (2-PG) into phosphoenolpyruvate (PEP). It is essential for the degradation of carbohydrates via glycolysis. The protein is Enolase of Wigglesworthia glossinidia brevipalpis.